A 574-amino-acid polypeptide reads, in one-letter code: Sulfate adenylyltransferase (574 aa).

The segment at 1–169 is N-terminal; the sequence is MANTPHGGVL…LEAVNKLNHY (169 aa). Residues 170 to 394 are catalytic; the sequence is DYVGLRYTPA…LRESSPPRAL (225 aa). Position 197 (Q197) interacts with sulfate. ATP is bound by residues 197 to 200 and 291 to 294; these read QTRN and GRDH. Residues T198, R199, and N200 contribute to the active site. Residue R199 coordinates sulfate. A295 lines the sulfate pocket. V333 provides a ligand contact to ATP. An allosteric regulation domain; adenylyl-sulfate kinase-like region spans residues 395-574; it reads QGFTIFLTGY…LESEGYFERL (180 aa). 3'-phosphoadenylyl sulfate contacts are provided by residues 434–437, R451, 477–478, and R516; these read DTVR and IA.

It in the N-terminal section; belongs to the sulfate adenylyltransferase family. In the C-terminal section; belongs to the APS kinase family. In terms of assembly, homohexamer. Dimer of trimers.

The protein resides in the cytoplasm. It carries out the reaction sulfate + ATP + H(+) = adenosine 5'-phosphosulfate + diphosphate. It participates in sulfur metabolism; hydrogen sulfide biosynthesis; sulfite from sulfate: step 1/3. With respect to regulation, allosterically inhibited by 3'-phosphoadenosine 5'-phosphosulfate (PAPS). Its function is as follows. Catalyzes the first intracellular reaction of sulfate assimilation, forming adenosine-5'-phosphosulfate (APS) from inorganic sulfate and ATP. Plays an important role in sulfate activation as a component of the biosynthesis pathway of sulfur-containing amino acids. This chain is Sulfate adenylyltransferase, found in Emericella nidulans (strain FGSC A4 / ATCC 38163 / CBS 112.46 / NRRL 194 / M139) (Aspergillus nidulans).